The sequence spans 355 residues: 3'-5' exonuclease (355 aa).

The interval 1–121 (MDKYLIKLPN…PSPEKEKPEK (121 aa)) is disordered. 3 stretches are compositionally biased toward basic and acidic residues: residues 17 to 29 (VSDK…KETP), 36 to 50 (AKKD…KENT), and 72 to 92 (KNLD…ENPP). 2 positions are modified to phosphoserine: Ser105 and Ser113. Residues 147–315 (VMQWVEKQKE…GQVIYRDLEQ (169 aa)) enclose the 3'-5' exonuclease domain. Mg(2+) is bound by residues Asp164, Glu166, and Asp302.

It belongs to the WRNexo family.

It is found in the nucleus. Its function is as follows. Has exonuclease activity on both single-stranded and duplex templates bearing overhangs, but not blunt ended duplex DNA, and cleaves in a 3'-5' direction. Essential for the formation of DNA replication focal centers. Has an important role in maintaining genome stability. In Drosophila ananassae (Fruit fly), this protein is 3'-5' exonuclease.